A 207-amino-acid polypeptide reads, in one-letter code: Thymidylate kinase (207 aa).

7 to 14 (GCEGTGKT) contacts ATP.

This sequence belongs to the thymidylate kinase family.

It catalyses the reaction dTMP + ATP = dTDP + ADP. Functionally, phosphorylation of dTMP to form dTDP in both de novo and salvage pathways of dTTP synthesis. The polypeptide is Thymidylate kinase (Aster yellows witches'-broom phytoplasma (strain AYWB)).